A 168-amino-acid chain; its full sequence is Protein C2-DOMAIN ABA-RELATED 1 (168 aa).

M1 carries the post-translational modification N-acetylmethionine. Positions 1 to 104 (MENLVGLLRI…EAIKFAHQLG (104 aa)) constitute a C2 domain. The Ca(2+) site is built by R21, D22, D27, D73, Y74, D75, and D81.

Belongs to the plant CAR protein family. In terms of assembly, dimers and oligomers. Binds to PYR/PYL/RCAR abscisic acid intracellular receptors in an ABA-independent manner, both at the plasma membrane and in the nucleus. Interacts directly with PYR1, PYL1, PYL4, PYL6 and PYL8. Binds phospholipids in a Ca(2+)-dependent manner. The cofactor is Ca(2+). Expressed in roots.

The protein localises to the cell membrane. The protein resides in the nucleus. Functionally, stimulates the GTPase/ATPase activities of Obg-like ATPases. Mediates the transient calcium-dependent interaction of PYR/PYL/RCAR abscisic acid (ABA) receptors with the plasma membrane and thus regulates ABA sensitivity. Binds liposomes in the absence of exogenous Ca(2+), but this activity is enhanced in the presence of Ca(2+) and generates membrane curvature. The protein is Protein C2-DOMAIN ABA-RELATED 1 of Arabidopsis thaliana (Mouse-ear cress).